The following is a 159-amino-acid chain: Ribosomal RNA large subunit methyltransferase H (159 aa).

Residues L76, G108, and 127–132 (FSKMTF) each bind S-adenosyl-L-methionine.

Belongs to the RNA methyltransferase RlmH family. Homodimer.

The protein localises to the cytoplasm. It carries out the reaction pseudouridine(1915) in 23S rRNA + S-adenosyl-L-methionine = N(3)-methylpseudouridine(1915) in 23S rRNA + S-adenosyl-L-homocysteine + H(+). In terms of biological role, specifically methylates the pseudouridine at position 1915 (m3Psi1915) in 23S rRNA. The protein is Ribosomal RNA large subunit methyltransferase H of Exiguobacterium sp. (strain ATCC BAA-1283 / AT1b).